The chain runs to 244 residues: 1-(5-phosphoribosyl)-5-[(5-phosphoribosylamino)methylideneamino] imidazole-4-carboxamide isomerase (244 aa).

Catalysis depends on D8, which acts as the Proton acceptor. D129 serves as the catalytic Proton donor.

The protein belongs to the HisA/HisF family.

It localises to the cytoplasm. The enzyme catalyses 1-(5-phospho-beta-D-ribosyl)-5-[(5-phospho-beta-D-ribosylamino)methylideneamino]imidazole-4-carboxamide = 5-[(5-phospho-1-deoxy-D-ribulos-1-ylimino)methylamino]-1-(5-phospho-beta-D-ribosyl)imidazole-4-carboxamide. The protein operates within amino-acid biosynthesis; L-histidine biosynthesis; L-histidine from 5-phospho-alpha-D-ribose 1-diphosphate: step 4/9. The chain is 1-(5-phosphoribosyl)-5-[(5-phosphoribosylamino)methylideneamino] imidazole-4-carboxamide isomerase from Maricaulis maris (strain MCS10) (Caulobacter maris).